The sequence spans 520 residues: MESSISQTLSKLSDPTTSLVIVVSLFIFISFITRRRRPPYPPGPRGWPIIGNMLMMDQLTHRGLANLAKKYGGLCHLRMGFLHMYAVSSPEVARQVLQVQDSVFSNRPATIAISYLTYDRADMAFAHYGPFWRQMRKVCVMKVFSRKRAESWASVRDEVDKMVRSVSCNVGKPINVGEQIFALTRNITYRAAFGSACEKGQDEFIRILQEFSKLFGAFNVADFIPYFGWIDPQGINKRLVKARNDLDGFIDDIIDEHMKKKENQNAVDDGDVVDTDMVDDLLAFYSEEAKLVSETADLQNSIKLTRDNIKAIIMDVMFGGTETVASAIEWALTELLRSPEDLKRVQQELAEVVGLDRRVEESDIEKLTYLKCTLKETLRMHPPIPLLLHETAEDTSIDGFFIPKKSRVMINAFAIGRDPTSWTDPDTFRPSRFLEPGVPDFKGSNFEFIPFGSGRRSCPGMQLGLYALDLAVAHILHCFTWKLPDGMKPSELDMNDVFGLTAPKATRLFAVPTTRLICAL.

Met-1 is modified (N-acetylmethionine). A helical membrane pass occupies residues 12–32 (LSDPTTSLVIVVSLFIFISFI). Residue Cys-458 coordinates heme.

Belongs to the cytochrome P450 family. The cofactor is heme.

The protein localises to the membrane. It participates in aromatic compound metabolism; phenylpropanoid biosynthesis. The chain is Cytochrome P450 84A1 (CYP84A1) from Arabidopsis thaliana (Mouse-ear cress).